A 68-amino-acid chain; its full sequence is Large ribosomal subunit protein bL32 (68 aa).

This sequence belongs to the bacterial ribosomal protein bL32 family.

This chain is Large ribosomal subunit protein bL32, found in Onion yellows phytoplasma (strain OY-M).